Reading from the N-terminus, the 205-residue chain is Pyridoxal 5'-phosphate synthase subunit PdxT (205 aa).

53-55 provides a ligand contact to L-glutamine; sequence GES. Cys85 acts as the Nucleophile in catalysis. L-glutamine is bound by residues Arg112 and 140-141; that span reads IR. Active-site charge relay system residues include His176 and Glu178.

It belongs to the glutaminase PdxT/SNO family. As to quaternary structure, in the presence of PdxS, forms a dodecamer of heterodimers. Only shows activity in the heterodimer.

The enzyme catalyses aldehydo-D-ribose 5-phosphate + D-glyceraldehyde 3-phosphate + L-glutamine = pyridoxal 5'-phosphate + L-glutamate + phosphate + 3 H2O + H(+). It catalyses the reaction L-glutamine + H2O = L-glutamate + NH4(+). Its pathway is cofactor biosynthesis; pyridoxal 5'-phosphate biosynthesis. In terms of biological role, catalyzes the hydrolysis of glutamine to glutamate and ammonia as part of the biosynthesis of pyridoxal 5'-phosphate. The resulting ammonia molecule is channeled to the active site of PdxS. The sequence is that of Pyridoxal 5'-phosphate synthase subunit PdxT from Haloquadratum walsbyi (strain DSM 16790 / HBSQ001).